A 120-amino-acid polypeptide reads, in one-letter code: Large ribosomal subunit protein uL18 (120 aa).

The protein belongs to the universal ribosomal protein uL18 family. In terms of assembly, part of the 50S ribosomal subunit; part of the 5S rRNA/L5/L18/L25 subcomplex. Contacts the 5S and 23S rRNAs.

Its function is as follows. This is one of the proteins that bind and probably mediate the attachment of the 5S RNA into the large ribosomal subunit, where it forms part of the central protuberance. In Picosynechococcus sp. (strain ATCC 27264 / PCC 7002 / PR-6) (Agmenellum quadruplicatum), this protein is Large ribosomal subunit protein uL18.